Here is a 51-residue protein sequence, read N- to C-terminus: Large ribosomal subunit protein eL39 (51 aa).

The span at 1-15 (MAAKKSFKIKQKLAK) shows a compositional bias: basic residues. The disordered stretch occupies residues 1-21 (MAAKKSFKIKQKLAKAKNQNR).

It belongs to the eukaryotic ribosomal protein eL39 family. Interacts with YIH1.

The sequence is that of Large ribosomal subunit protein eL39 (RPL39) from Eremothecium gossypii (strain ATCC 10895 / CBS 109.51 / FGSC 9923 / NRRL Y-1056) (Yeast).